The following is a 580-amino-acid chain: Isocitrate lyase (580 aa).

106–108 (SGW) is a binding site for substrate. A Mg(2+)-binding site is contributed by D177. C215 (proton acceptor) is an active-site residue. Substrate-binding positions include 216-217 (GH), R252, 441-445 (NLSPS), and T476. The Microbody targeting signal motif lies at 578–580 (SRM).

This sequence belongs to the isocitrate lyase/PEP mutase superfamily. Isocitrate lyase family. As to quaternary structure, homotetramer. It depends on Mg(2+) as a cofactor.

It is found in the glyoxysome. It carries out the reaction D-threo-isocitrate = glyoxylate + succinate. It functions in the pathway carbohydrate metabolism; glyoxylate cycle; (S)-malate from isocitrate: step 1/2. In terms of biological role, involved in storage lipid mobilization during the growth of higher plant seedling. The sequence is that of Isocitrate lyase (ICL 8) from Pinus taeda (Loblolly pine).